Reading from the N-terminus, the 231-residue chain is NADH-ubiquinone oxidoreductase chain 4 (231 aa).

A run of 6 helical transmembrane segments spans residues 1–21 (PIAG…YGII), 34–54 (TFLP…LTCL), 61–80 (SLIA…AIII), 84–106 (WGLS…LFCL), 118–138 (ILIL…WWLL), and 156–178 (LLIM…LSML).

It belongs to the complex I subunit 4 family.

The protein localises to the mitochondrion membrane. It carries out the reaction a ubiquinone + NADH + 5 H(+)(in) = a ubiquinol + NAD(+) + 4 H(+)(out). In terms of biological role, core subunit of the mitochondrial membrane respiratory chain NADH dehydrogenase (Complex I) that is believed to belong to the minimal assembly required for catalysis. Complex I functions in the transfer of electrons from NADH to the respiratory chain. The immediate electron acceptor for the enzyme is believed to be ubiquinone. This chain is NADH-ubiquinone oxidoreductase chain 4 (MT-ND4), found in Trimeresurus albolabris (White-lipped pit viper).